A 413-amino-acid polypeptide reads, in one-letter code: Probable protein S-acyltransferase 3 (413 aa).

The next 2 helical transmembrane spans lie at 65-85 (LTSF…LVWI) and 96-116 (VLAS…LTSA). In terms of domain architecture, DHHC spans 171-221 (KFCDTCLLYRPPRASHCSICNNCVQRFDHHCPWVGQCIARRNYPFFICFIS). Cys-201 (S-palmitoyl cysteine intermediate) is an active-site residue. Helical transmembrane passes span 216–236 (FICF…FSWI) and 255–275 (SVIL…LTIF). Positions 364–413 (RDSPRKLPLPTRNLDDIKDISDNYDRSTTTREDASDRDPSFFSSQLDLPK) are disordered. Residues 376–402 (NLDDIKDISDNYDRSTTTREDASDRDP) are compositionally biased toward basic and acidic residues. Residues 404–413 (FFSSQLDLPK) show a composition bias toward polar residues.

It belongs to the DHHC palmitoyltransferase family. In terms of tissue distribution, expressed in flowers and pollen.

The protein resides in the endoplasmic reticulum membrane. Its subcellular location is the cytoplasmic vesicle membrane. The enzyme catalyses L-cysteinyl-[protein] + hexadecanoyl-CoA = S-hexadecanoyl-L-cysteinyl-[protein] + CoA. Palmitoyl acyltransferase. The chain is Probable protein S-acyltransferase 3 (PAT03) from Arabidopsis thaliana (Mouse-ear cress).